A 698-amino-acid polypeptide reads, in one-letter code: MARTTPIERYRNIGIVAHVDAGKTTTTERVLFYTGMSHKIGEVHDGAATTDWMVQEQERGITITSAAVTTFWRGMEAQFAEHRINIIDTPGHVDFTIEVERSLRVLDGAVVVFCGSSGVEPQSETVWRQADKYHVPRLVFVNKMDRAGADFDRVINQIRNRLGATCVPIQLNIGAEENFKGVIDLIKMKAINWSETDQGMTFTYEDIPANLAAKAAEMHEYLVEAAAEASDELMNKYLEEGELSEVEIKTALRQRTINNEIVLATCGSAFKNKGVQAVLDAVVDFLPAPIDVPAITGIDESENEVKRPPDDNAPFAALAFKIATDPFVGTLTFIRVYSGVLESGAGVYNSVKQKRERVGRIVQMHANDRTELKEVRAGDIAAAIGLKDVTTGDTLCDNNHRVILERMDFPEPVITIAVEPRSKADQDKMGIALQKLAAEDPSFKVETDEESAQTLISGMGELHLDIIVDRMRREFGVECNVGKPQVAYRETIRSKVEVEGKFVRQSGGRGQFGHVWLRIEPLEEGAGYEFVNEIVGGVVPREFIPAVDKGIQEQMKNGVLAGYPVLDVRVSLFDGSYHDVDSNEMAFKIAGSMGFKKGALEATPVLLEPCMKVEVTTPEDYMGDVVGDLNRRRGIIEGMDDGIAGVKLVHAVVPLSEMFGYATDLRSASQGRASYSMEFLKYTDAPQNIAKAIIESRN.

The tr-type G domain occupies glutamate 8–isoleucine 290. GTP contacts are provided by residues alanine 17 to threonine 24, aspartate 88 to histidine 92, and asparagine 142 to aspartate 145.

The protein belongs to the TRAFAC class translation factor GTPase superfamily. Classic translation factor GTPase family. EF-G/EF-2 subfamily.

The protein localises to the cytoplasm. Its function is as follows. Catalyzes the GTP-dependent ribosomal translocation step during translation elongation. During this step, the ribosome changes from the pre-translocational (PRE) to the post-translocational (POST) state as the newly formed A-site-bound peptidyl-tRNA and P-site-bound deacylated tRNA move to the P and E sites, respectively. Catalyzes the coordinated movement of the two tRNA molecules, the mRNA and conformational changes in the ribosome. The sequence is that of Elongation factor G 1 from Shewanella frigidimarina (strain NCIMB 400).